The sequence spans 201 residues: Potassium-transporting ATPase KdpC subunit (201 aa).

Residues 10 to 30 (VLLVALTAVTGLAYPLAVTGI) form a helical membrane-spanning segment.

The protein belongs to the KdpC family. In terms of assembly, the system is composed of three essential subunits: KdpA, KdpB and KdpC.

It localises to the cell inner membrane. Functionally, part of the high-affinity ATP-driven potassium transport (or Kdp) system, which catalyzes the hydrolysis of ATP coupled with the electrogenic transport of potassium into the cytoplasm. This subunit acts as a catalytic chaperone that increases the ATP-binding affinity of the ATP-hydrolyzing subunit KdpB by the formation of a transient KdpB/KdpC/ATP ternary complex. The protein is Potassium-transporting ATPase KdpC subunit of Methylorubrum extorquens (strain PA1) (Methylobacterium extorquens).